A 152-amino-acid chain; its full sequence is UPF0260 protein BAB1_1496 (152 aa).

This sequence belongs to the UPF0260 family.

The polypeptide is UPF0260 protein BAB1_1496 (Brucella abortus (strain 2308)).